We begin with the raw amino-acid sequence, 539 residues long: Cell division control protein 6 homolog (539 aa).

The interval 1–40 (MPAIAGPSSSPQKHVVGSRSESIGGVRSAEVNTSRKRKLI) is disordered. The short motif at 35-38 (RKRK) is the Nuclear localization signal element.

The protein belongs to the CDC6/cdc18 family. Highly expressed in roots, flower buds and etiolated seedlings. Expressed in leaves and stems. Highly expressed in proliferating cells such as root meristems, leaf primordia and young growing leaves, as well as cells undergoing endoreduplication cycles.

It is found in the nucleus. Its function is as follows. May be involved in the initiation of DNA replication. May play a role in endoreduplication. Could act as one of the factors that contributes to maintain endoreduplication competence. In Arabidopsis thaliana (Mouse-ear cress), this protein is Cell division control protein 6 homolog.